Reading from the N-terminus, the 426-residue chain is Serine--tRNA ligase (426 aa).

Position 233 to 235 (233 to 235 (TAE)) interacts with L-serine. Position 264-266 (264-266 (RRE)) interacts with ATP. L-serine is bound at residue Glu-287. 351–354 (EISS) serves as a coordination point for ATP. Ser-386 is an L-serine binding site.

This sequence belongs to the class-II aminoacyl-tRNA synthetase family. Type-1 seryl-tRNA synthetase subfamily. As to quaternary structure, homodimer. The tRNA molecule binds across the dimer.

The protein resides in the cytoplasm. It carries out the reaction tRNA(Ser) + L-serine + ATP = L-seryl-tRNA(Ser) + AMP + diphosphate + H(+). The enzyme catalyses tRNA(Sec) + L-serine + ATP = L-seryl-tRNA(Sec) + AMP + diphosphate + H(+). It participates in aminoacyl-tRNA biosynthesis; selenocysteinyl-tRNA(Sec) biosynthesis; L-seryl-tRNA(Sec) from L-serine and tRNA(Sec): step 1/1. In terms of biological role, catalyzes the attachment of serine to tRNA(Ser). Is also able to aminoacylate tRNA(Sec) with serine, to form the misacylated tRNA L-seryl-tRNA(Sec), which will be further converted into selenocysteinyl-tRNA(Sec). The protein is Serine--tRNA ligase of Thermosipho africanus (strain TCF52B).